The following is a 182-amino-acid chain: Photosystem I assembly protein Ycf4 (182 aa).

The next 2 membrane-spanning stretches (helical) occupy residues 22–42 and 63–83; these read WSSVIFLGASGFLLTGLSSYL and VMCFYGILGLIFSVYLGLTIF.

Belongs to the Ycf4 family.

The protein resides in the plastid. The protein localises to the chloroplast thylakoid membrane. In terms of biological role, seems to be required for the assembly of the photosystem I complex. The chain is Photosystem I assembly protein Ycf4 from Oltmannsiellopsis viridis (Marine flagellate).